The following is a 198-amino-acid chain: NAD(P)H dehydrogenase (quinone) (198 aa).

Residues 4 to 189 (VLVLYYSMYG…ALARYQGRHV (186 aa)) enclose the Flavodoxin-like domain. FMN-binding positions include 10–15 (SMYGHV) and 78–80 (TRF). Residue Y12 participates in NAD(+) binding. W98 serves as a coordination point for substrate. Residues 113–118 (STGTGG) and H133 each bind FMN.

It belongs to the WrbA family. It depends on FMN as a cofactor.

It carries out the reaction a quinone + NADH + H(+) = a quinol + NAD(+). The catalysed reaction is a quinone + NADPH + H(+) = a quinol + NADP(+). This Halorhodospira halophila (strain DSM 244 / SL1) (Ectothiorhodospira halophila (strain DSM 244 / SL1)) protein is NAD(P)H dehydrogenase (quinone).